The following is a 337-amino-acid chain: tRNA N6-adenosine threonylcarbamoyltransferase (337 aa).

Fe cation is bound by residues H111 and H115. Residues L134–G138, D167, G180, and N272 contribute to the substrate site. Fe cation is bound at residue D300.

The protein belongs to the KAE1 / TsaD family. It depends on Fe(2+) as a cofactor.

It is found in the cytoplasm. It carries out the reaction L-threonylcarbamoyladenylate + adenosine(37) in tRNA = N(6)-L-threonylcarbamoyladenosine(37) in tRNA + AMP + H(+). In terms of biological role, required for the formation of a threonylcarbamoyl group on adenosine at position 37 (t(6)A37) in tRNAs that read codons beginning with adenine. Is involved in the transfer of the threonylcarbamoyl moiety of threonylcarbamoyl-AMP (TC-AMP) to the N6 group of A37, together with TsaE and TsaB. TsaD likely plays a direct catalytic role in this reaction. The polypeptide is tRNA N6-adenosine threonylcarbamoyltransferase (Shewanella sediminis (strain HAW-EB3)).